The primary structure comprises 138 residues: NADPH-dependent 7-cyano-7-deazaguanine reductase (138 aa).

Cys-53 serves as the catalytic Thioimide intermediate. The Proton donor role is filled by Asp-60. Residues 75 to 77 (VEL) and 94 to 95 (HE) each bind substrate.

Belongs to the GTP cyclohydrolase I family. QueF type 1 subfamily.

The protein resides in the cytoplasm. The enzyme catalyses 7-aminomethyl-7-carbaguanine + 2 NADP(+) = 7-cyano-7-deazaguanine + 2 NADPH + 3 H(+). Its pathway is tRNA modification; tRNA-queuosine biosynthesis. Catalyzes the NADPH-dependent reduction of 7-cyano-7-deazaguanine (preQ0) to 7-aminomethyl-7-deazaguanine (preQ1). The chain is NADPH-dependent 7-cyano-7-deazaguanine reductase from Gloeothece citriformis (strain PCC 7424) (Cyanothece sp. (strain PCC 7424)).